The following is a 385-amino-acid chain: MTLEAIRYSTGKLVIIDQLQLPYVEKYIEVPTSKDAWHAIKKMRVRGAPAIAIVAALALASELHTLMAHDKLSNRAEEVRLFIQEKLDYLVSSRPTAVNLSDAARKLAAHVSDHAEMPNSTGRAVAEAFIQAAEEMLAKDLKDNTNIGKYGAEWIIRNALAGGRSKATILTHCNTGSLATSGYGTALGVIRALASKNALAYAYCTETRPYNQGSRLTAYELVHENLPATLVTDSMVAALLAKAEAAVDAIVVGADRVAANGDTANKIGTYALAVLAKFHGVKFLVAAPLTTIDRSTKSGADIVIEERPASEVTTIKGAVETESSCDRIKLETVRIAAEGIHVWNPAFDVTPSALIDAIITERGVVERGTDGRYNFDGIFEDHSAF.

Aspartate 255 acts as the Proton donor in catalysis.

The protein belongs to the eIF-2B alpha/beta/delta subunits family. MtnA subfamily.

Its subcellular location is the cytoplasm. It is found in the nucleus. The catalysed reaction is 5-(methylsulfanyl)-alpha-D-ribose 1-phosphate = 5-(methylsulfanyl)-D-ribulose 1-phosphate. It participates in amino-acid biosynthesis; L-methionine biosynthesis via salvage pathway; L-methionine from S-methyl-5-thio-alpha-D-ribose 1-phosphate: step 1/6. In terms of biological role, catalyzes the interconversion of methylthioribose-1-phosphate (MTR-1-P) into methylthioribulose-1-phosphate (MTRu-1-P). The polypeptide is Methylthioribose-1-phosphate isomerase (mri1) (Aspergillus clavatus (strain ATCC 1007 / CBS 513.65 / DSM 816 / NCTC 3887 / NRRL 1 / QM 1276 / 107)).